Consider the following 172-residue polypeptide: Sec-independent protein translocase protein TatB (172 aa).

Residues 1–21 (MIDLGISKLALIGAVALVVIG) traverse the membrane as a helical segment. Residues 97–129 (GDPASRQTATQAAEWRPAPAKSRNGRNSWRNKQ) are disordered.

Belongs to the TatB family. As to quaternary structure, the Tat system comprises two distinct complexes: a TatABC complex, containing multiple copies of TatA, TatB and TatC subunits, and a separate TatA complex, containing only TatA subunits. Substrates initially bind to the TatABC complex, which probably triggers association of the separate TatA complex to form the active translocon.

The protein localises to the cell inner membrane. In terms of biological role, part of the twin-arginine translocation (Tat) system that transports large folded proteins containing a characteristic twin-arginine motif in their signal peptide across membranes. Together with TatC, TatB is part of a receptor directly interacting with Tat signal peptides. TatB may form an oligomeric binding site that transiently accommodates folded Tat precursor proteins before their translocation. The sequence is that of Sec-independent protein translocase protein TatB from Ralstonia nicotianae (strain ATCC BAA-1114 / GMI1000) (Ralstonia solanacearum).